Reading from the N-terminus, the 504-residue chain is Maturase K (504 aa).

It belongs to the intron maturase 2 family. MatK subfamily.

It is found in the plastid. Its subcellular location is the chloroplast. Functionally, usually encoded in the trnK tRNA gene intron. Probably assists in splicing its own and other chloroplast group II introns. The chain is Maturase K from Quercus petraea (Durmast oak).